A 184-amino-acid chain; its full sequence is Isopentenyl-diphosphate Delta-isomerase (184 aa).

The Mn(2+) site is built by His25 and His32. The Nudix hydrolase domain maps to Pro30–Leu164. Residue Cys67 is part of the active site. His69 provides a ligand contact to Mn(2+). Glu87 serves as a coordination point for Mg(2+). Positions 114 and 116 each coordinate Mn(2+). Glu116 is an active-site residue.

The protein belongs to the IPP isomerase type 1 family. As to quaternary structure, homodimer. Mg(2+) serves as cofactor. Requires Mn(2+) as cofactor.

Its subcellular location is the cytoplasm. It catalyses the reaction isopentenyl diphosphate = dimethylallyl diphosphate. It functions in the pathway isoprenoid biosynthesis; dimethylallyl diphosphate biosynthesis; dimethylallyl diphosphate from isopentenyl diphosphate: step 1/1. In terms of biological role, catalyzes the 1,3-allylic rearrangement of the homoallylic substrate isopentenyl (IPP) to its highly electrophilic allylic isomer, dimethylallyl diphosphate (DMAPP). The protein is Isopentenyl-diphosphate Delta-isomerase of Klebsiella pneumoniae subsp. pneumoniae (strain ATCC 700721 / MGH 78578).